The primary structure comprises 316 residues: DDRGK domain-containing protein 1 (316 aa).

Residues 1-3 (MVE) are Lumenal-facing. A helical membrane pass occupies residues 4-24 (LDYLFLGSVGFLTIALMLIIL). Residues 25-316 (RIIKLYFDEK…VEHVSELTAA (292 aa)) lie on the Cytoplasmic side of the membrane. Positions 147–187 (LEQEKEKRLQKEREKQMEQEEEERKRKCREREEREKREEEE) are disordered.

This sequence belongs to the DDRGK1 family.

The protein localises to the endoplasmic reticulum membrane. In terms of biological role, substrate adapter for ufmylation, the covalent attachment of the ubiquitin-like modifier UFM1 to substrate proteins. The protein is DDRGK domain-containing protein 1 of Brugia malayi (Filarial nematode worm).